Here is a 930-residue protein sequence, read N- to C-terminus: Progesterone receptor (930 aa).

Residues methionine 1–alanine 11 are compositionally biased toward basic and acidic residues. Disordered stretches follow at residues methionine 1–alanine 133 and leucine 148–alanine 260. The AF3; mediates transcriptional activation stretch occupies residues methionine 1–leucine 165. Residues methionine 1–glutamine 565 are modulating, Pro-Rich. Residue lysine 7 forms a Glycyl lysine isopeptide (Lys-Gly) (interchain with G-Cter in SUMO) linkage. At serine 20 the chain carries Phosphoserine. Residues glutamine 38–valine 49 show a composition bias toward polar residues. An LXXL motif 1 motif is present at residues leucine 56–leucine 60. The residue at position 82 (serine 82) is a Phosphoserine. The short motif at leucine 116–leucine 120 is the LXXL motif 2 element. Serine 131 bears the Phosphoserine mark. A mediates transcriptional transrepression region spans residues methionine 166–histidine 304. A Nuclear localization signal motif is present at residues lysine 184–arginine 188. The segment covering proline 187–proline 204 has biased composition (low complexity). Phosphoserine is present on residues serine 191 and serine 212. Position 293 is a phosphoserine; by MAPK1 (serine 293). The segment at alanine 334–aspartate 356 is disordered. Serine 344 is subject to Phosphoserine; by MAPK. Lysine 387 is covalently cross-linked (Glycyl lysine isopeptide (Lys-Gly) (interchain with G-Cter in SUMO); alternate). Lysine 387 participates in a covalent cross-link: Glycyl lysine isopeptide (Lys-Gly) (interchain with G-Cter in ubiquitin); alternate. The residue at position 399 (serine 399) is a Phosphoserine; by CDK2. The tract at residues aspartate 415–serine 454 is disordered. Positions alanine 420–valine 430 are enriched in pro residues. Low complexity predominate over residues proline 431–serine 454. Residues serine 457–arginine 547 are AF1; mediates transcriptional activation. A Glycyl lysine isopeptide (Lys-Gly) (interchain with G-Cter in SUMO) cross-link involves residue lysine 532. The segment at residues lysine 566–phenylalanine 640 is a DNA-binding region (nuclear receptor). NR C4-type zinc fingers lie at residues cysteine 568 to cysteine 588 and cysteine 604 to cysteine 628. Serine 673 bears the Phosphoserine mark. In terms of domain architecture, NR LBD spans glutamine 676 to isoleucine 910. Positions leucine 684 to lysine 930 are AF2; mediates transcriptional activation. A progesterone-binding site is contributed by arginine 763.

This sequence belongs to the nuclear hormone receptor family. NR3 subfamily. In terms of assembly, interacts with SMARD1 and UNC45A. Interacts with CUEDC2; the interaction promotes ubiquitination, decreases sumoylation, and represses transcriptional activity. Interacts with PIAS3; the interaction promotes sumoylation of PR in a hormone-dependent manner, inhibits DNA-binding, and alters nuclear export. Interacts with SP1; the interaction requires ligand-induced phosphorylation on Ser-344 by ERK1/2-MAPK. Interacts with PRMT2. Interacts with NCOA2 and NCOA1. Interacts with KLF9. Interacts with GTF2B. In terms of processing, phosphorylated on multiple serine sites. Several of these sites are hormone-dependent. Phosphorylation on Ser-293 is highly hormone-dependent and modulates ubiquitination and sumoylation on Lys-387. Phosphorylation on Ser-102 and Ser-344 also requires induction by hormone. Basal phosphorylation on Ser-82, Ser-191 and Ser-399 is increased in response to progesterone and can be phosphorylated in vitro by the CDK2-A1 complex. Increased levels of phosphorylation on Ser-399 also in the presence of EGF, heregulin, IGF, PMA and FBS. Phosphorylation at this site by CDK2 is ligand-independent, and increases nuclear translocation and transcriptional activity. Phosphorylation at Ser-293, but not at Ser-191, is impaired during the G(2)/M phase of the cell cycle. Phosphorylation on Ser-344 by ERK1/2 MAPK is required for interaction with SP1. Post-translationally, sumoylation is hormone-dependent and represses transcriptional activity. Sumoylation on all three sites is enhanced by PIAS3. Desumoylated by SENP1. Sumoylation on Lys-387, the main site of sumoylation, is repressed by ubiquitination on the same site, and modulated by phosphorylation at Ser-293. Ubiquitination is hormone-dependent and represses sumoylation on the same site. Promoted by MAPK-mediated phosphorylation on Ser-293. Ubiquitinated by UBR5, leading to its degradation: UBR5 specifically recognizes and binds ligand-bound PGR when it is not associated with coactivators (NCOAs). In presence of NCOAs, the UBR5-degron is not accessible, preventing its ubiquitination and degradation. In terms of processing, palmitoylated by ZDHHC7 and ZDHHC21. Palmitoylation is required for plasma membrane targeting and for rapid intracellular signaling via ERK and AKT kinases and cAMP generation.

The protein resides in the nucleus. Its subcellular location is the cytoplasm. In terms of biological role, the steroid hormones and their receptors are involved in the regulation of eukaryotic gene expression and affect cellular proliferation and differentiation in target tissues. Transcriptional activator of several progesteron-dependent promoters in a variety of cell types. Involved in activation of SRC-dependent MAPK signaling on hormone stimulation. This is Progesterone receptor (PGR) from Oryctolagus cuniculus (Rabbit).